A 135-amino-acid chain; its full sequence is CDGSH iron-sulfur domain-containing protein 2A (135 aa).

At 1–37 (MVLESIARVIKVQLPAYLKRLPIPDSIAGFIRLTVSE) the chain is on the lumenal side. The chain crosses the membrane as a helical span at residues 38–60 (WLRLLPFLGVLALLGYLAIRPFL). Topologically, residues 61-135 (LKKKQQKDSL…GPLILKKKEV (75 aa)) are cytoplasmic. [2Fe-2S] cluster contacts are provided by cysteine 99, cysteine 101, cysteine 110, and histidine 114.

Belongs to the CISD protein family. CISD2 subfamily. Homodimer. It depends on [2Fe-2S] cluster as a cofactor.

Its subcellular location is the endoplasmic reticulum membrane. It is found in the mitochondrion outer membrane. Regulator of autophagy that contributes to antagonize becn1-mediated cellular autophagy at the endoplasmic reticulum. Participates in the interaction of bcl2 with becn1 and is required for bcl2-mediated depression of endoplasmic reticulum Ca(2+) stores during autophagy. This Xenopus laevis (African clawed frog) protein is CDGSH iron-sulfur domain-containing protein 2A (cisd2-a).